A 334-amino-acid chain; its full sequence is Beta-hexosaminidase (334 aa).

Substrate is bound by residues Asp-60, Arg-68, Arg-133, and 163-164; that span reads KH. The active-site Proton donor/acceptor is the His-176. Residue Asp-247 is the Nucleophile of the active site.

Belongs to the glycosyl hydrolase 3 family. NagZ subfamily.

It is found in the cytoplasm. The enzyme catalyses Hydrolysis of terminal non-reducing N-acetyl-D-hexosamine residues in N-acetyl-beta-D-hexosaminides.. It participates in cell wall biogenesis; peptidoglycan recycling. Its function is as follows. Plays a role in peptidoglycan recycling by cleaving the terminal beta-1,4-linked N-acetylglucosamine (GlcNAc) from peptide-linked peptidoglycan fragments, giving rise to free GlcNAc, anhydro-N-acetylmuramic acid and anhydro-N-acetylmuramic acid-linked peptides. The protein is Beta-hexosaminidase of Xanthomonas euvesicatoria pv. vesicatoria (strain 85-10) (Xanthomonas campestris pv. vesicatoria).